Consider the following 198-residue polypeptide: Recombination protein RecR (198 aa).

The C4-type zinc-finger motif lies at 57 to 72 (CSICGNLTESDPCAIC). In terms of domain architecture, Toprim spans 80–175 (TTILVVEESK…KVTRLARGLA (96 aa)).

It belongs to the RecR family.

Its function is as follows. May play a role in DNA repair. It seems to be involved in an RecBC-independent recombinational process of DNA repair. It may act with RecF and RecO. In Lactococcus lactis subsp. cremoris (strain MG1363), this protein is Recombination protein RecR.